Consider the following 258-residue polypeptide: Methylthioribulose-1-phosphate dehydratase (258 aa).

The span at 1-20 (MTPPSNGQAAETNDHLVQSD) shows a compositional bias: polar residues. The interval 1–21 (MTPPSNGQAAETNDHLVQSDN) is disordered. A substrate-binding site is contributed by Cys105. His123 and His125 together coordinate Zn(2+). Catalysis depends on Glu153, which acts as the Proton donor/acceptor. Position 210 (His210) interacts with Zn(2+).

This sequence belongs to the aldolase class II family. MtnB subfamily. Zn(2+) is required as a cofactor.

It localises to the cytoplasm. It carries out the reaction 5-(methylsulfanyl)-D-ribulose 1-phosphate = 5-methylsulfanyl-2,3-dioxopentyl phosphate + H2O. The protein operates within amino-acid biosynthesis; L-methionine biosynthesis via salvage pathway; L-methionine from S-methyl-5-thio-alpha-D-ribose 1-phosphate: step 2/6. Catalyzes the dehydration of methylthioribulose-1-phosphate (MTRu-1-P) into 2,3-diketo-5-methylthiopentyl-1-phosphate (DK-MTP-1-P). This chain is Methylthioribulose-1-phosphate dehydratase, found in Chaetomium globosum (strain ATCC 6205 / CBS 148.51 / DSM 1962 / NBRC 6347 / NRRL 1970) (Soil fungus).